The chain runs to 405 residues: NADH-quinone oxidoreductase subunit D (405 aa).

This sequence belongs to the complex I 49 kDa subunit family. NDH-1 is composed of 14 different subunits. Subunits NuoB, C, D, E, F, and G constitute the peripheral sector of the complex.

The protein resides in the cell inner membrane. The enzyme catalyses a quinone + NADH + 5 H(+)(in) = a quinol + NAD(+) + 4 H(+)(out). Functionally, NDH-1 shuttles electrons from NADH, via FMN and iron-sulfur (Fe-S) centers, to quinones in the respiratory chain. The immediate electron acceptor for the enzyme in this species is believed to be ubiquinone. Couples the redox reaction to proton translocation (for every two electrons transferred, four hydrogen ions are translocated across the cytoplasmic membrane), and thus conserves the redox energy in a proton gradient. The sequence is that of NADH-quinone oxidoreductase subunit D from Ruegeria pomeroyi (strain ATCC 700808 / DSM 15171 / DSS-3) (Silicibacter pomeroyi).